The primary structure comprises 85 residues: Alpha-defensin 11 (85 aa).

An N-terminal signal peptide occupies residues Ala1 to Ala11. A propeptide spanning residues Asp12 to Ser50 is cleaved from the precursor. The tract at residues Ile14–Leu46 is disordered. 3 cysteine pairs are disulfide-bonded: Cys56/Cys84, Cys58/Cys73, and Cys63/Cys83.

Belongs to the alpha-defensin family. Paneth cells of the small bowel.

The protein resides in the secreted. Probably contributes to the antimicrobial barrier function of the small bowel mucosa. The sequence is that of Alpha-defensin 11 (Defa11) from Mus musculus (Mouse).